The following is a 334-amino-acid chain: Protein SCO1 homolog 1, mitochondrial (334 aa).

Residues 1 to 13 (MASALCRTASRLR) constitute a mitochondrion transit peptide. Positions 74–120 (SASDTTSKHDSGKPETKSSEKNEKSGGSESSDGGSDHKNERASGKDV) are disordered. 2 stretches are compositionally biased toward basic and acidic residues: residues 79 to 99 (TSKHDSGKPETKSSEKNEKSG) and 107 to 120 (GSDHKNERASGKDV). Residues 125–144 (VSWMSFFLLFATGAGLVYYY) form a helical membrane-spanning segment. Residues 166–331 (PSAGKAAIGG…TDGVVKEIRQ (166 aa)) enclose the Thioredoxin domain. Cu cation is bound by residues C206, C210, and H295.

It belongs to the SCO1/2 family. In terms of tissue distribution, expressed in the whole plant with highest expression in imbibed seeds, embryos, endosperm, and root tips.

Its subcellular location is the mitochondrion inner membrane. In terms of biological role, thought to play a role in cellular copper homeostasis, mitochondrial redox signaling or insertion of copper into the active site of COX. Plays an essential role in embryo development. In Arabidopsis thaliana (Mouse-ear cress), this protein is Protein SCO1 homolog 1, mitochondrial (HCC1).